The primary structure comprises 124 residues: Small ribosomal subunit protein uS12 (124 aa).

A 3-methylthioaspartic acid modification is found at Asp89.

Belongs to the universal ribosomal protein uS12 family. In terms of assembly, part of the 30S ribosomal subunit. Contacts proteins S8 and S17. May interact with IF1 in the 30S initiation complex.

With S4 and S5 plays an important role in translational accuracy. In terms of biological role, interacts with and stabilizes bases of the 16S rRNA that are involved in tRNA selection in the A site and with the mRNA backbone. Located at the interface of the 30S and 50S subunits, it traverses the body of the 30S subunit contacting proteins on the other side and probably holding the rRNA structure together. The combined cluster of proteins S8, S12 and S17 appears to hold together the shoulder and platform of the 30S subunit. The sequence is that of Small ribosomal subunit protein uS12 from Leptospira biflexa serovar Patoc (strain Patoc 1 / Ames).